The primary structure comprises 264 residues: tRNA (guanine-N(1)-)-methyltransferase (264 aa).

Residues G125 and 145–150 (LGDFVL) contribute to the S-adenosyl-L-methionine site.

This sequence belongs to the RNA methyltransferase TrmD family. Homodimer.

The protein resides in the cytoplasm. It carries out the reaction guanosine(37) in tRNA + S-adenosyl-L-methionine = N(1)-methylguanosine(37) in tRNA + S-adenosyl-L-homocysteine + H(+). In terms of biological role, specifically methylates guanosine-37 in various tRNAs. This chain is tRNA (guanine-N(1)-)-methyltransferase, found in Burkholderia multivorans (strain ATCC 17616 / 249).